We begin with the raw amino-acid sequence, 349 residues long: Ion-translocating oxidoreductase complex subunit D (349 aa).

A run of 3 helical transmembrane segments spans residues 36 to 56 (CAFF…VALS), 77 to 99 (SAML…WMIV), and 124 to 144 (AMAA…TWIA). Residue threonine 185 is modified to FMN phosphoryl threonine. Transmembrane regions (helical) follow at residues 212–232 (STGV…IVLL), 239–259 (WHIS…GFLL), 265–285 (ASPL…FIAT), 291–311 (ATSP…VYII), and 315–335 (GGYP…APFI).

Belongs to the NqrB/RnfD family. The complex is composed of six subunits: RnfA, RnfB, RnfC, RnfD, RnfE and RnfG. The cofactor is FMN.

It localises to the cell inner membrane. Its function is as follows. Part of a membrane-bound complex that couples electron transfer with translocation of ions across the membrane. This is Ion-translocating oxidoreductase complex subunit D from Shewanella oneidensis (strain ATCC 700550 / JCM 31522 / CIP 106686 / LMG 19005 / NCIMB 14063 / MR-1).